Here is a 1488-residue protein sequence, read N- to C-terminus: Chromosome partition protein MukB (1488 aa).

Position 34-41 (34-41) interacts with ATP; it reads GGNGAGKS. Coiled coils occupy residues 326 to 418, 444 to 472, and 509 to 602; these read LEAD…QYNQ, LDTF…QTAH, and RHLA…QRAP. A flexible hinge region spans residues 666–783; the sequence is PGGAEDQRLN…SLPIFGRAAR (118 aa). Coiled-coil stretches lie at residues 835–923, 977–1116, and 1209–1265; these read EAEI…AKLE, EMLS…AKAG, and VEAI…LQSV. Residues 1049-1074 form a disordered region; that stretch reads ADSGAEERARQRRDELHAQLSNNRSR. Positions 1051–1065 are enriched in basic and acidic residues; sequence SGAEERARQRRDELH.

Belongs to the SMC family. MukB subfamily. As to quaternary structure, homodimerization via its hinge domain. Binds to DNA via its C-terminal region. Interacts, and probably forms a ternary complex, with MukE and MukF via its C-terminal region. The complex formation is stimulated by calcium or magnesium. Interacts with tubulin-related protein FtsZ.

Its subcellular location is the cytoplasm. The protein resides in the nucleoid. Plays a central role in chromosome condensation, segregation and cell cycle progression. Functions as a homodimer, which is essential for chromosome partition. Involved in negative DNA supercoiling in vivo, and by this means organize and compact chromosomes. May achieve or facilitate chromosome segregation by condensation DNA from both sides of a centrally located replisome during cell division. The chain is Chromosome partition protein MukB from Salmonella gallinarum (strain 287/91 / NCTC 13346).